Here is a 146-residue protein sequence, read N- to C-terminus: Hemoglobin subunit beta (146 aa).

The Globin domain maps to 2–146 (HWTAEEKQLI…VAHALARKYH (145 aa)). Heme b is bound by residues H63 and H92.

The protein belongs to the globin family. Heterotetramer of two alpha chains and two beta chains. Red blood cells.

Involved in oxygen transport from the lung to the various peripheral tissues. The chain is Hemoglobin subunit beta (HBB) from Aegypius monachus (Cinereous vulture).